Reading from the N-terminus, the 400-residue chain is SEC14-like protein 3 (400 aa).

The region spanning 76 to 249 (PPEVIQKYMP…HFGGTLTDPD (174 aa)) is the CRAL-TRIO domain. At serine 223 the chain carries Phosphoserine. In terms of domain architecture, GOLD spans 275 to 383 (KTQYEHSVQI…AKKVSFTVEV (109 aa)).

In terms of processing, the N-terminus seems to be blocked. In terms of tissue distribution, detected in a layer of supportive cells in olfactory epithelium, in the apical region of the trachea and in the surface layer of ciliated bronchial epithelium in the lung.

Functionally, probable hydrophobic ligand-binding protein; may play a role in the transport of hydrophobic ligands like tocopherol, squalene and phospholipids. The polypeptide is SEC14-like protein 3 (Sec14l3) (Rattus norvegicus (Rat)).